The primary structure comprises 227 residues: Phosphoribosylformylglycinamidine synthase subunit PurQ (227 aa).

A Glutamine amidotransferase type-1 domain is found at 3–225 (FAVIVFPGSN…LKQWRETYVV (223 aa)). Residue Cys86 is the Nucleophile of the active site. Active-site residues include His194 and Glu196.

In terms of assembly, part of the FGAM synthase complex composed of 1 PurL, 1 PurQ and 2 PurS subunits.

The protein resides in the cytoplasm. It catalyses the reaction N(2)-formyl-N(1)-(5-phospho-beta-D-ribosyl)glycinamide + L-glutamine + ATP + H2O = 2-formamido-N(1)-(5-O-phospho-beta-D-ribosyl)acetamidine + L-glutamate + ADP + phosphate + H(+). It carries out the reaction L-glutamine + H2O = L-glutamate + NH4(+). It participates in purine metabolism; IMP biosynthesis via de novo pathway; 5-amino-1-(5-phospho-D-ribosyl)imidazole from N(2)-formyl-N(1)-(5-phospho-D-ribosyl)glycinamide: step 1/2. Functionally, part of the phosphoribosylformylglycinamidine synthase complex involved in the purines biosynthetic pathway. Catalyzes the ATP-dependent conversion of formylglycinamide ribonucleotide (FGAR) and glutamine to yield formylglycinamidine ribonucleotide (FGAM) and glutamate. The FGAM synthase complex is composed of three subunits. PurQ produces an ammonia molecule by converting glutamine to glutamate. PurL transfers the ammonia molecule to FGAR to form FGAM in an ATP-dependent manner. PurS interacts with PurQ and PurL and is thought to assist in the transfer of the ammonia molecule from PurQ to PurL. This chain is Phosphoribosylformylglycinamidine synthase subunit PurQ, found in Bacillus mycoides (strain KBAB4) (Bacillus weihenstephanensis).